Here is a 285-residue protein sequence, read N- to C-terminus: 4-diphosphocytidyl-2-C-methyl-D-erythritol kinase (285 aa).

Lys-12 is a catalytic residue. 95–105 contributes to the ATP binding site; that stretch reads PMGGGVGGGSS. Asp-137 is an active-site residue.

Belongs to the GHMP kinase family. IspE subfamily.

The enzyme catalyses 4-CDP-2-C-methyl-D-erythritol + ATP = 4-CDP-2-C-methyl-D-erythritol 2-phosphate + ADP + H(+). It participates in isoprenoid biosynthesis; isopentenyl diphosphate biosynthesis via DXP pathway; isopentenyl diphosphate from 1-deoxy-D-xylulose 5-phosphate: step 3/6. In terms of biological role, catalyzes the phosphorylation of the position 2 hydroxy group of 4-diphosphocytidyl-2C-methyl-D-erythritol. The chain is 4-diphosphocytidyl-2-C-methyl-D-erythritol kinase from Actinobacillus pleuropneumoniae serotype 5b (strain L20).